A 92-amino-acid chain; its full sequence is MAKGSLNLQDLFLNQLRKEKVNVTIFLLSGFQLKGVIKGFDNFTLIVETDNNKQQLIYKHAISSIMPSKPINYMAQAQNNQQASQQSNNNQG.

Positions 10–71 (DLFLNQLRKE…ISSIMPSKPI (62 aa)) constitute a Sm domain. Positions 73-92 (YMAQAQNNQQASQQSNNNQG) are disordered. A compositionally biased stretch (low complexity) spans 75–92 (AQAQNNQQASQQSNNNQG).

The protein belongs to the Hfq family. In terms of assembly, homohexamer.

Functionally, RNA chaperone that binds small regulatory RNA (sRNAs) and mRNAs to facilitate mRNA translational regulation in response to envelope stress, environmental stress and changes in metabolite concentrations. Also binds with high specificity to tRNAs. The sequence is that of RNA-binding protein Hfq from Caldicellulosiruptor bescii (strain ATCC BAA-1888 / DSM 6725 / KCTC 15123 / Z-1320) (Anaerocellum thermophilum).